The primary structure comprises 94 residues: Protein LURE 1.1 (94 aa).

The first 19 residues, 1-19 (MKLIFIFLTLLIFVSSCTS), serve as a signal peptide directing secretion. Cystine bridges form between cysteine 58–cysteine 75, cysteine 61–cysteine 82, and cysteine 65–cysteine 84. The interval 67 to 87 (RRDRYIRTCSFERKLCRCSYS) is PRK6 binding.

Belongs to the DEFL family. Binds to PRK6 LRRs. As to expression, expressed in the pistil. Detected exclusively in the synergid cells.

The protein localises to the secreted. Functionally, pollen tube attractants guiding pollen tubes to the ovular micropyle. The protein is Protein LURE 1.1 of Arabidopsis thaliana (Mouse-ear cress).